Here is a 416-residue protein sequence, read N- to C-terminus: Serine hydroxymethyltransferase (416 aa).

Residues leucine 121 and 125-127 (GHL) contribute to the (6S)-5,6,7,8-tetrahydrofolate site. Lysine 230 carries the post-translational modification N6-(pyridoxal phosphate)lysine. A (6S)-5,6,7,8-tetrahydrofolate-binding site is contributed by 355–357 (SPF).

The protein belongs to the SHMT family. Homodimer. It depends on pyridoxal 5'-phosphate as a cofactor.

The protein localises to the cytoplasm. The enzyme catalyses (6R)-5,10-methylene-5,6,7,8-tetrahydrofolate + glycine + H2O = (6S)-5,6,7,8-tetrahydrofolate + L-serine. It functions in the pathway one-carbon metabolism; tetrahydrofolate interconversion. Its pathway is amino-acid biosynthesis; glycine biosynthesis; glycine from L-serine: step 1/1. Functionally, catalyzes the reversible interconversion of serine and glycine with tetrahydrofolate (THF) serving as the one-carbon carrier. This reaction serves as the major source of one-carbon groups required for the biosynthesis of purines, thymidylate, methionine, and other important biomolecules. Also exhibits THF-independent aldolase activity toward beta-hydroxyamino acids, producing glycine and aldehydes, via a retro-aldol mechanism. This is Serine hydroxymethyltransferase from Streptococcus thermophilus (strain CNRZ 1066).